The sequence spans 274 residues: 2,3,4,5-tetrahydropyridine-2,6-dicarboxylate N-succinyltransferase (274 aa).

Substrate-binding residues include R104 and D141.

It belongs to the transferase hexapeptide repeat family. As to quaternary structure, homotrimer.

Its subcellular location is the cytoplasm. The catalysed reaction is (S)-2,3,4,5-tetrahydrodipicolinate + succinyl-CoA + H2O = (S)-2-succinylamino-6-oxoheptanedioate + CoA. It participates in amino-acid biosynthesis; L-lysine biosynthesis via DAP pathway; LL-2,6-diaminopimelate from (S)-tetrahydrodipicolinate (succinylase route): step 1/3. This chain is 2,3,4,5-tetrahydropyridine-2,6-dicarboxylate N-succinyltransferase, found in Citrobacter koseri (strain ATCC BAA-895 / CDC 4225-83 / SGSC4696).